Consider the following 225-residue polypeptide: ATP-dependent Clp protease proteolytic subunit (225 aa).

Catalysis depends on Ser123, which acts as the Nucleophile. His148 is a catalytic residue.

This sequence belongs to the peptidase S14 family. As to quaternary structure, fourteen ClpP subunits assemble into 2 heptameric rings which stack back to back to give a disk-like structure with a central cavity, resembling the structure of eukaryotic proteasomes.

It is found in the cytoplasm. It catalyses the reaction Hydrolysis of proteins to small peptides in the presence of ATP and magnesium. alpha-casein is the usual test substrate. In the absence of ATP, only oligopeptides shorter than five residues are hydrolyzed (such as succinyl-Leu-Tyr-|-NHMec, and Leu-Tyr-Leu-|-Tyr-Trp, in which cleavage of the -Tyr-|-Leu- and -Tyr-|-Trp bonds also occurs).. Cleaves peptides in various proteins in a process that requires ATP hydrolysis. Has a chymotrypsin-like activity. Plays a major role in the degradation of misfolded proteins. The sequence is that of ATP-dependent Clp protease proteolytic subunit from Chlorobium luteolum (strain DSM 273 / BCRC 81028 / 2530) (Pelodictyon luteolum).